We begin with the raw amino-acid sequence, 345 residues long: RNA polymerase II holoenzyme cyclin-like subunit (345 aa).

The Cyclin N-terminal domain maps to 53 to 144; that stretch reads QQINRLGKRM…IGECEFYLIS (92 aa). Positions 256 to 285 are disordered; sequence GLTPQSSSGLQAMLPPQSPAGEGPAEGNKN.

This sequence belongs to the cyclin family. Cyclin C subfamily. In terms of assembly, component of the srb8-11 complex, a regulatory module of the Mediator complex.

It localises to the nucleus. Component of the srb8-11 complex. The srb8-11 complex is a regulatory module of the Mediator complex which is itself involved in regulation of basal and activated RNA polymerase II-dependent transcription. The srb8-11 complex may be involved in the transcriptional repression of a subset of genes regulated by Mediator. It may inhibit the association of the Mediator complex with RNA polymerase II to form the holoenzyme complex. The srb8-11 complex phosphorylates the C-terminal domain (CTD) of the largest subunit of RNA polymerase II. The polypeptide is RNA polymerase II holoenzyme cyclin-like subunit (ssn8) (Neurospora crassa (strain ATCC 24698 / 74-OR23-1A / CBS 708.71 / DSM 1257 / FGSC 987)).